A 273-amino-acid polypeptide reads, in one-letter code: Shikimate dehydrogenase (NADP(+)) (273 aa).

Shikimate-binding positions include S15–S17 and T62. K66 acts as the Proton acceptor in catalysis. Residue E78 participates in NADP(+) binding. N87 and D102 together coordinate shikimate. Residues G126 to A130, N150 to K155, and I217 each bind NADP(+). Y219 contacts shikimate. Residue G240 coordinates NADP(+).

This sequence belongs to the shikimate dehydrogenase family. In terms of assembly, homodimer.

It carries out the reaction shikimate + NADP(+) = 3-dehydroshikimate + NADPH + H(+). It participates in metabolic intermediate biosynthesis; chorismate biosynthesis; chorismate from D-erythrose 4-phosphate and phosphoenolpyruvate: step 4/7. In terms of biological role, involved in the biosynthesis of the chorismate, which leads to the biosynthesis of aromatic amino acids. Catalyzes the reversible NADPH linked reduction of 3-dehydroshikimate (DHSA) to yield shikimate (SA). The polypeptide is Shikimate dehydrogenase (NADP(+)) (Nitrosopumilus maritimus (strain SCM1)).